Consider the following 555-residue polypeptide: Probable apyrase 6 (555 aa).

The segment covering 1–10 has biased composition (basic residues); sequence MRRSHARSRV. The tract at residues 1-45 is disordered; that stretch reads MRRSHARSRVKNSSSSKSDMDPIKFQIRSGNRAPSSSSTYTLTKP. Residues 1–55 are Cytoplasmic-facing; sequence MRRSHARSRVKNSSSSKSDMDPIKFQIRSGNRAPSSSSTYTLTKPNSKHAKSNLL. The segment covering 28–45 has biased composition (polar residues); that stretch reads RSGNRAPSSSSTYTLTKP. The chain crosses the membrane as a helical span at residues 56–76; sequence LTVGSISVVLGVLFLCYSILF. At 77–512 the chain is on the extracellular side; sequence SGGNLRGSLR…HALFSNHPKT (436 aa). 89-99 contacts ATP; that stretch reads VVIDGGSTGTR. Glu-212 (proton acceptor) is an active-site residue. 236 to 246 contributes to the ATP binding site; the sequence is GIVELGGASAQ. 2 N-linked (GlcNAc...) asparagine glycosylation sites follow: Asn-267 and Asn-348. A helical membrane pass occupies residues 513–533; the sequence is LHYLIGIPILMTVLVYLVTKW. Over 534-555 the chain is Cytoplasmic; that stretch reads RKPQLKTIYDLEKGRYIVTRIR.

This sequence belongs to the GDA1/CD39 NTPase family. Ca(2+) serves as cofactor. As to expression, detected in mature pollen grains (at the protein level). Also expressed in the veins and hydathode regions of rosette leaves.

It is found in the cytoplasmic vesicle membrane. The catalysed reaction is a ribonucleoside 5'-triphosphate + 2 H2O = a ribonucleoside 5'-phosphate + 2 phosphate + 2 H(+). Catalyzes the hydrolysis of phosphoanhydride bonds of nucleoside tri- and di-phosphates. Involved in the regulation of pollen and anther development. This chain is Probable apyrase 6 (APY6), found in Arabidopsis thaliana (Mouse-ear cress).